A 405-amino-acid polypeptide reads, in one-letter code: Arginine biosynthesis bifunctional protein ArgJ (405 aa).

Residues T167, K190, T201, E281, N400, and S405 each coordinate substrate. T201 (nucleophile) is an active-site residue.

This sequence belongs to the ArgJ family. As to quaternary structure, heterotetramer of two alpha and two beta chains.

The protein localises to the cytoplasm. The catalysed reaction is N(2)-acetyl-L-ornithine + L-glutamate = N-acetyl-L-glutamate + L-ornithine. The enzyme catalyses L-glutamate + acetyl-CoA = N-acetyl-L-glutamate + CoA + H(+). Its pathway is amino-acid biosynthesis; L-arginine biosynthesis; L-ornithine and N-acetyl-L-glutamate from L-glutamate and N(2)-acetyl-L-ornithine (cyclic): step 1/1. It participates in amino-acid biosynthesis; L-arginine biosynthesis; N(2)-acetyl-L-ornithine from L-glutamate: step 1/4. Its function is as follows. Catalyzes two activities which are involved in the cyclic version of arginine biosynthesis: the synthesis of N-acetylglutamate from glutamate and acetyl-CoA as the acetyl donor, and of ornithine by transacetylation between N(2)-acetylornithine and glutamate. The polypeptide is Arginine biosynthesis bifunctional protein ArgJ (Nocardia farcinica (strain IFM 10152)).